The sequence spans 288 residues: Fructokinase (288 aa).

Thr-131 serves as a coordination point for ATP. Zn(2+) contacts are provided by His-154, Cys-169, His-172, and Cys-175. ATP contacts are provided by residues Pro-183 and 231-235 (GVMNQ).

It belongs to the ROK (NagC/XylR) family. Mg(2+) is required as a cofactor.

It catalyses the reaction D-fructose + ATP = D-fructose 6-phosphate + ADP + H(+). Its activity is regulated as follows. Inhibition by zinc ions. The protein is Fructokinase (scrK) of Pediococcus pentosaceus.